We begin with the raw amino-acid sequence, 320 residues long: MSTPFKMERGVKYRDAAKTSIIPVKNIDPNQELLKKPEWMKIKLPASSAKIESIKNGMRRHGLHSVCEEASCPNLHECFNHGTATFMILGAICTRRCPFCDVAHGKPLPPDPEEPQKLAETIQDMKLKYVVITSVDRDDLPDRGAGHFSECVKAVRELNPNIKIEILVPDFRGRVTQALEKLKDNPPDVFNHNLENVPRLYKEIRPGADYEWSLKLLREFKEMFPNIPTKSGLMVGLGETNEEILQVMQDLRDNGVTMLTLGQYLQPSRHHLPVARYVPPTEFDIFRDKANEMGFEHAACGPFVRSSYHADLQASGGLVK.

Cysteine 67, cysteine 72, cysteine 78, cysteine 93, cysteine 97, cysteine 100, and serine 307 together coordinate [4Fe-4S] cluster. The Radical SAM core domain occupies 79 to 296; that stretch reads FNHGTATFMI…RDKANEMGFE (218 aa).

It belongs to the radical SAM superfamily. Lipoyl synthase family. The cofactor is [4Fe-4S] cluster.

The protein localises to the cytoplasm. It carries out the reaction [[Fe-S] cluster scaffold protein carrying a second [4Fe-4S](2+) cluster] + N(6)-octanoyl-L-lysyl-[protein] + 2 oxidized [2Fe-2S]-[ferredoxin] + 2 S-adenosyl-L-methionine + 4 H(+) = [[Fe-S] cluster scaffold protein] + N(6)-[(R)-dihydrolipoyl]-L-lysyl-[protein] + 4 Fe(3+) + 2 hydrogen sulfide + 2 5'-deoxyadenosine + 2 L-methionine + 2 reduced [2Fe-2S]-[ferredoxin]. It participates in protein modification; protein lipoylation via endogenous pathway; protein N(6)-(lipoyl)lysine from octanoyl-[acyl-carrier-protein]: step 2/2. Functionally, catalyzes the radical-mediated insertion of two sulfur atoms into the C-6 and C-8 positions of the octanoyl moiety bound to the lipoyl domains of lipoate-dependent enzymes, thereby converting the octanoylated domains into lipoylated derivatives. The sequence is that of Lipoyl synthase from Haemophilus influenzae (strain PittGG).